Reading from the N-terminus, the 106-residue chain is Ribosomal protein eL42-like (106 aa).

A disordered region spans residues Y26 to K53. At K53 the chain carries N6-methyllysine.

It belongs to the eukaryotic ribosomal protein eL42 family. As to expression, ubiquitously expressed.

The protein localises to the cytoplasm. The polypeptide is Ribosomal protein eL42-like (RPL36AL) (Homo sapiens (Human)).